A 572-amino-acid polypeptide reads, in one-letter code: Proline--tRNA ligase (572 aa).

The protein belongs to the class-II aminoacyl-tRNA synthetase family. ProS type 1 subfamily. In terms of assembly, homodimer.

It localises to the cytoplasm. The enzyme catalyses tRNA(Pro) + L-proline + ATP = L-prolyl-tRNA(Pro) + AMP + diphosphate. Functionally, catalyzes the attachment of proline to tRNA(Pro) in a two-step reaction: proline is first activated by ATP to form Pro-AMP and then transferred to the acceptor end of tRNA(Pro). As ProRS can inadvertently accommodate and process non-cognate amino acids such as alanine and cysteine, to avoid such errors it has two additional distinct editing activities against alanine. One activity is designated as 'pretransfer' editing and involves the tRNA(Pro)-independent hydrolysis of activated Ala-AMP. The other activity is designated 'posttransfer' editing and involves deacylation of mischarged Ala-tRNA(Pro). The misacylated Cys-tRNA(Pro) is not edited by ProRS. This chain is Proline--tRNA ligase, found in Escherichia coli O157:H7.